We begin with the raw amino-acid sequence, 498 residues long: Polygalacturonan/rhamnogalacturonan-binding protein YtcQ (498 aa).

A signal peptide spans 1-22 (MGNKWRVLLIVLVLALGGVLAG). Cysteine 23 carries N-palmitoyl cysteine lipidation. Residue cysteine 23 is the site of S-diacylglycerol cysteine attachment.

Belongs to the bacterial solute-binding protein 1 family. As to quaternary structure, the complex is probably composed of two ATP-binding proteins (MsmX), two transmembrane proteins (YtcP and YteP) and a solute-binding protein (YtcQ).

Its subcellular location is the cell membrane. In terms of biological role, involved in pectin degradation. Part of the ABC transporter complex YtcQP-YteP involved in the uptake of polygalacturonan and rhamnogalacturonan type I. This chain is Polygalacturonan/rhamnogalacturonan-binding protein YtcQ (ytcQ), found in Bacillus subtilis (strain 168).